The chain runs to 324 residues: MKFAKISQVAHYAPEQVVTNDDLAQIMDTSDEWISSRTGIKKRHISHHESTSDLATRVALDLLKKSEISAQDLDFIIVATITPDSLMPSTAARVQANIGAKKAFAYDLVAACSGFVFALSTAEKLISSGAYQKGLVIGSETLSKVVDWSDRGTAVLFGDGAGGVLLESTSDQHFLAEIQKTDGSRGESLTSCLMGLQSPFAQTEDDEKYLTMDGRAIFDFAIRDVAQSIKDTIEASPLEVDEIDYFLLHQANDRILNKIAKKLSVSRDKIPANMMEYGNTSAASIPILLSECVEQGLVKLDGSQKILLSGFGGGLTWGTLIVTI.

Residues Cys-112 and His-249 contribute to the active site. Positions 250-254 (QANDR) are ACP-binding. Asn-279 is a catalytic residue.

It belongs to the thiolase-like superfamily. FabH family. Homodimer.

The protein localises to the cytoplasm. It catalyses the reaction malonyl-[ACP] + acetyl-CoA + H(+) = 3-oxobutanoyl-[ACP] + CO2 + CoA. Its pathway is lipid metabolism; fatty acid biosynthesis. In terms of biological role, catalyzes the condensation reaction of fatty acid synthesis by the addition to an acyl acceptor of two carbons from malonyl-ACP. Catalyzes the first condensation reaction which initiates fatty acid synthesis and may therefore play a role in governing the total rate of fatty acid production. Possesses both acetoacetyl-ACP synthase and acetyl transacylase activities. Its substrate specificity determines the biosynthesis of branched-chain and/or straight-chain of fatty acids. The chain is Beta-ketoacyl-[acyl-carrier-protein] synthase III from Streptococcus gordonii (strain Challis / ATCC 35105 / BCRC 15272 / CH1 / DL1 / V288).